The primary structure comprises 310 residues: HPr kinase/phosphorylase 1 (310 aa).

Residues H139 and K160 contribute to the active site. Position 154–161 (154–161 (GQSGVGKS)) interacts with ATP. Position 161 (S161) interacts with Mg(2+). The active-site Proton acceptor; for phosphorylation activity. Proton donor; for dephosphorylation activity is the D178. The tract at residues 202–211 (LEIRGLGIIN) is important for the catalytic mechanism of both phosphorylation and dephosphorylation. E203 contributes to the Mg(2+) binding site. R244 is an active-site residue. The interval 265-270 (PVRPGR) is important for the catalytic mechanism of dephosphorylation.

It belongs to the HPrK/P family. As to quaternary structure, homohexamer. Mg(2+) is required as a cofactor.

It carries out the reaction [HPr protein]-L-serine + ATP = [HPr protein]-O-phospho-L-serine + ADP + H(+). The catalysed reaction is [HPr protein]-O-phospho-L-serine + phosphate + H(+) = [HPr protein]-L-serine + diphosphate. In terms of biological role, catalyzes the ATP- as well as the pyrophosphate-dependent phosphorylation of a specific serine residue in HPr, a phosphocarrier protein of the phosphoenolpyruvate-dependent sugar phosphotransferase system (PTS). HprK/P also catalyzes the pyrophosphate-producing, inorganic phosphate-dependent dephosphorylation (phosphorolysis) of seryl-phosphorylated HPr (P-Ser-HPr). The two antagonistic activities of HprK/P are regulated by several intracellular metabolites, which change their concentration in response to the absence or presence of rapidly metabolisable carbon sources (glucose, fructose, etc.) in the growth medium. Also phosphorylates/dephosphorylates the HPr-like catabolite repression protein crh on a specific serine residue. Therefore, by controlling the phosphorylation state of HPr and crh, HPrK/P is a sensor enzyme that plays a major role in the regulation of carbon metabolism and sugar transport: it mediates carbon catabolite repression (CCR), and regulates PTS-catalyzed carbohydrate uptake and inducer exclusion. The polypeptide is HPr kinase/phosphorylase 1 (hprK1) (Oceanobacillus iheyensis (strain DSM 14371 / CIP 107618 / JCM 11309 / KCTC 3954 / HTE831)).